The following is a 589-amino-acid chain: Guanylate-binding protein 1 (589 aa).

The segment at 1-309 is GTPase domain (Globular); that stretch reads MASEIHMSEP…SAICSGELPC (309 aa). One can recognise a GB1/RHD3-type G domain in the interval 35–276; the sequence is TQPVVVVAIV…FTSYIFSYSG (242 aa). GTP is bound by residues 47–53, 67–69, and 97–101; these read YRTGKSY, LGS, and DTEGL. Phosphoserine is present on S156. Residue C586 is modified to Cysteine methyl ester. The S-farnesyl cysteine moiety is linked to residue C586. C586 carries the S-geranylgeranyl cysteine; partial lipid modification. T587 carries the post-translational modification Phosphothreonine. The propeptide at 587-589 is removed in mature form; that stretch reads TIL.

The protein belongs to the TRAFAC class dynamin-like GTPase superfamily. GB1/RHD3 GTPase family. GB1 subfamily. Homodimer; homodimerization occurs upon GTP-binding and is required for the second hydrolysis step from GDP to GMP. Undergoes conformational changes and oligomerization upon GTP-binding and hydrolysis. Heterodimer with other family members, including GBP2, GBP3, GBP4 and GBP5. Dimerization regulates subcellular location to membranous structures. Interacts with SQSTM1. Interacts (when phosphorylated) with 14-3-3 protein sigma (SFN); leading to GBP1 retention in the cytosol and inactivation. Isoprenylation of mouse GBP1 is incomplete. It persistently exists in the cell as a mixture of C20-modified and (more predominantly) unmodified form. Isoprenylation is required for proper subcellular location. Post-translationally, phosphorylated at Ser-156 by PIM1 in absence of infection, inhibits GBP1: phosphorylation promotes interaction with 14-3-3 protein sigma (SFN), leading to GBP1 retention in the cytosol. Dephosphorylated in response to infection, liberating GBP1.

The protein resides in the cytoplasmic vesicle membrane. The protein localises to the golgi apparatus membrane. It localises to the cell membrane. Its subcellular location is the cytoplasm. It is found in the cytosol. The protein resides in the secreted. The enzyme catalyses GTP + H2O = GDP + phosphate + H(+). It catalyses the reaction GDP + H2O = GMP + phosphate + H(+). In terms of biological role, interferon (IFN)-inducible GTPase that plays important roles in innate immunity against a diverse range of bacterial, viral and protozoan pathogens. Hydrolyzes GTP to GMP in two consecutive cleavage reactions: GTP is first hydrolyzed to GDP and then to GMP in a processive manner. Following infection, recruited to the pathogen-containing vacuoles or vacuole-escaped bacteria and promotes both inflammasome assembly and autophagy. Acts as a positive regulator of inflammasome assembly by facilitating the detection of inflammasome ligands from pathogens. Involved in the lysis of pathogen-containing vacuoles, releasing pathogens into the cytosol. Following pathogen release in the cytosol, forms a protein coat in a GTPase-dependent manner that encapsulates pathogens and promotes the detection of ligands by pattern recognition receptors. Plays a key role in inflammasome assembly in response to infection by Gram-negative bacteria: following pathogen release in the cytosol, forms a protein coat that encapsulates Gram-negative bacteria and directly binds to lipopolysaccharide (LPS), disrupting the O-antigen barrier and unmasking lipid A that is that detected by the non-canonical inflammasome effector CASP4/CASP11. Also promotes recruitment of proteins that mediate bacterial cytolysis, leading to release double-stranded DNA (dsDNA) that activates the AIM2 inflammasome. Involved in autophagy by regulating bacteriolytic peptide generation via its interaction with ubiquitin-binding protein SQSTM1, which delivers monoubiquitinated proteins to autolysosomes for the generation of bacteriolytic peptides. Confers protection to several pathogens, including the bacterial pathogens L.monocytogenes and M.bovis BCG as well as the protozoan pathogen T.gondii. Exhibits antiviral activity against influenza virus. The polypeptide is Guanylate-binding protein 1 (Gbp1) (Mus musculus (Mouse)).